The sequence spans 992 residues: MKTETVPPFQETPAGSSCHLNNLLSSRKLMAVGVLLGWLLVIHLLVNVWLLCLLSALLVVLGGWLGSSLAGVASGRLHLERFIPLATCPPCPEAERQLEREINRTIQMIIRDFVLSWYRSVSQEPAFEEEMEAAMKGLVQELRRRMSVMDSHAVAQSVLTLCGCHLQSYIQAKEATAGKNGPVEPSHLWEAYCRATAPHPAVHSPSAEVTYTRGVVNLLLQGLVPKPHLETRTGRHVVVELITCNVILPLISRLSDPDWIHLVLVGIFSKARDPAPCPASAPEQPSVPTSLPLIAEVEQLPEGRASPVAAPVFLSYSEPEGSAGPSPEVEEGHEAVEGDLGGMCEERKVGNNSSHFLQPNVRGPLFLCEDSELESPLSELGKETIMLMTPGSFLSDRIQDALCALESSQALEPKDGEASEGAEAEEGPGTETETGLPVSTLNSCPEIHIDTADKEIEQGDVTASVTALLEGPEKTCPSRPSCLEKDLTNDVSSLDPTLPPVLLSSSPPGPLSSATFSFEPLSSPDGPVIIQNLRITGTITAREHSGTGFHPYTLYTVKYETALDGENSSGLQQLAYHTVNRRYREFLNLQTRLEEKPDLRKFIKNVKGPKKLFPDLPLGNMDSDRVEARKSLLESFLKQLCAIPEIANSEEVQEFLALNTDARIAFVKKPFMVSRIDKMVVSAIVDTLKTAFPRSEPQSPTEELSEAETESKPQTEGKKASKSRLRFSSSKISPALSVTEAQDKILYCLQEGNVESETLSMSAMESFIEKQTKLLEMQPTKAPEKDPEQPPKGRVDSCVSDAAVPAQDPSNSDPGTETELADTALDLLLLLLTEQWKWLCTENMQKFLRLIFGTLVQRWLEVQVANLTSPQRWVQYLLLLQESIWPGGVLPKFPRPVRTQEQKLAAEKQALQSLMGVLPDLVVEILGVNKCRLSWGLVLESLQQPLINRHLIYCLGDIILEFLDLSASVEESAATTSASDTPGNSKRMGVSS.

The PXA domain occupies 95-272; sequence ERQLEREINR…VLVGIFSKAR (178 aa). The disordered stretch occupies residues 410 to 442; the sequence is ALEPKDGEASEGAEAEEGPGTETETGLPVSTLN. Residues 418–428 are compositionally biased toward acidic residues; it reads ASEGAEAEEGP. The PX domain maps to 533 to 663; sequence LRITGTITAR…EFLALNTDAR (131 aa). A 1,2-diacyl-sn-glycero-3-phospho-(1D-myo-inositol-3-phosphate) is bound by residues Arg-582 and Arg-629. 3 disordered regions span residues 692–726, 778–797, and 973–992; these read FPRSEPQSPTEELSEAETESKPQTEGKKASKSRLR, QPTKAPEKDPEQPPKGRVDS, and AATTSASDTPGNSKRMGVSS. Basic and acidic residues-rich tracts occupy residues 709 to 719 and 782 to 795; these read TESKPQTEGKK and APEKDPEQPPKGRV. Residues 980–992 show a composition bias toward polar residues; the sequence is DTPGNSKRMGVSS.

This sequence belongs to the sorting nexin family. As to quaternary structure, interacts with PTPRN.

The protein resides in the early endosome membrane. It localises to the cytoplasmic vesicle membrane. Functionally, plays a role in intracellular vesicle trafficking and exocytosis. May play a role in maintaining insulin-containing dense core vesicles in pancreatic beta-cells and in preventing their degradation. May play a role in insulin secretion. Interacts with membranes containing phosphatidylinositol 3-phosphate (PtdIns(3P)). The chain is Sorting nexin-19 (SNX19) from Homo sapiens (Human).